The chain runs to 163 residues: Neurotrophin-3 (163 aa).

An N-terminal signal peptide occupies residues 1 to 3 (IQS). Positions 4 to 119 (TSMDQGILTE…VLNRTSRRKR (116 aa)) are excised as a propeptide. Residues 35–61 (KQTARTKDGTQTTVKKSEAEADATASQ) are disordered. The N-linked (GlcNAc...) asparagine glycan is linked to N112.

Belongs to the NGF-beta family.

The protein resides in the secreted. Seems to promote the survival of visceral and proprioceptive sensory neurons. The chain is Neurotrophin-3 (NTF3) from Corallus caninus (Emerald tree boa).